Here is a 572-residue protein sequence, read N- to C-terminus: Outer spore wall assembly protein SHE10 (572 aa).

The signal sequence occupies residues Met-1–Gln-19. 2 coiled-coil regions span residues Ser-351–Val-372 and Phe-485–Gln-510. The tract at residues Ser-539 to Val-572 is disordered. A compositionally biased stretch (low complexity) spans Gln-560–Val-572.

It belongs to the SHE10 family. Component of the mitochondria-localized RNase mitochondrial RNA-processing (RNase MRP) composed of one single RNA encoded by the NME1 gene and at least 31 proteins. Absent in the nucleus-localized RNase MRP (NuMRP).

It is found in the mitochondrion. Involved in spore wall assembly. May be a component of the mitochondrial RNase MRP (MtMRP), a ribonucleoprotein endoribonuclease involved in the cleaving RNA transcripts to generate primers for DNA replication in mitochondria. This Eremothecium gossypii (strain ATCC 10895 / CBS 109.51 / FGSC 9923 / NRRL Y-1056) (Yeast) protein is Outer spore wall assembly protein SHE10.